The chain runs to 299 residues: Formin-like protein 12 (299 aa).

Residues 1 to 295 (MASNCEKMLS…LEKRKMNIKQ (295 aa)) form the FH2 domain.

The protein belongs to the formin-like family. Class-II subfamily.

The sequence is that of Formin-like protein 12 (FH12) from Arabidopsis thaliana (Mouse-ear cress).